Consider the following 328-residue polypeptide: Ubiquitin carboxyl-terminal hydrolase isozyme L5 (328 aa).

Residues glutamate 7–serine 225 enclose the UCH catalytic domain. The residue at position 47 (lysine 47) is an N6-succinyllysine. The active-site Nucleophile is cysteine 88. Lysine 158 carries the N6-acetyllysine modification. The Proton donor role is filled by histidine 164. Lysine 288 bears the N6-succinyllysine mark. Residues asparagine 290 to lysine 318 form the ULD domain. An interaction with ADRM1 region spans residues valine 312 to lysine 328.

Belongs to the peptidase C12 family. As to quaternary structure, component of the 19S (PA700) regulatory complex of the 26S proteasome. Interacts with ADRM1 and NFRKB. Component of the INO80 complex; specifically part of a complex module associated with N-terminus of INO80.

It localises to the cytoplasm. Its subcellular location is the nucleus. It carries out the reaction Thiol-dependent hydrolysis of ester, thioester, amide, peptide and isopeptide bonds formed by the C-terminal Gly of ubiquitin (a 76-residue protein attached to proteins as an intracellular targeting signal).. With respect to regulation, activated by ADRM1. Inhibited by interaction with NFRKB. In terms of biological role, protease that specifically cleaves 'Lys-48'-linked polyubiquitin chains. Deubiquitinating enzyme associated with the 19S regulatory subunit of the 26S proteasome. Putative regulatory component of the INO80 complex; however is inactive in the INO80 complex and is activated by a transient interaction of the INO80 complex with the proteasome via ADRM1. This chain is Ubiquitin carboxyl-terminal hydrolase isozyme L5 (UCHL5), found in Bos taurus (Bovine).